Reading from the N-terminus, the 330-residue chain is Phenylalanine--tRNA ligase alpha subunit (330 aa).

Glu-255 contributes to the Mg(2+) binding site.

The protein belongs to the class-II aminoacyl-tRNA synthetase family. Phe-tRNA synthetase alpha subunit type 1 subfamily. In terms of assembly, tetramer of two alpha and two beta subunits. Mg(2+) is required as a cofactor.

The protein localises to the cytoplasm. The enzyme catalyses tRNA(Phe) + L-phenylalanine + ATP = L-phenylalanyl-tRNA(Phe) + AMP + diphosphate + H(+). The protein is Phenylalanine--tRNA ligase alpha subunit of Acinetobacter baylyi (strain ATCC 33305 / BD413 / ADP1).